Here is a 350-residue protein sequence, read N- to C-terminus: Very-long-chain 3-oxoacyl-CoA reductase (350 aa).

A helical membrane pass occupies residues Ala-20–Ala-40. NADP(+) is bound by residues Val-66, Asp-120, Asn-147, Tyr-221, Lys-225, Val-254, and Ser-256. Tyr-221 functions as the Proton donor in the catalytic mechanism. Lys-225 serves as the catalytic Lowers pKa of active site Tyr.

This sequence belongs to the short-chain dehydrogenases/reductases (SDR) family.

The protein localises to the endoplasmic reticulum membrane. The enzyme catalyses a very-long-chain (3R)-3-hydroxyacyl-CoA + NADP(+) = a very-long-chain 3-oxoacyl-CoA + NADPH + H(+). The protein operates within lipid metabolism; fatty acid biosynthesis. Its function is as follows. Component of the microsomal membrane bound fatty acid elongation system, which produces the 26-carbon very long-chain fatty acids (VLCFA) from palmitate. Catalyzes the reduction of the 3-ketoacyl-CoA intermediate that is formed in each cycle of fatty acid elongation. VLCFAs serve as precursors for ceramide and sphingolipids. The chain is Very-long-chain 3-oxoacyl-CoA reductase from Lodderomyces elongisporus (strain ATCC 11503 / CBS 2605 / JCM 1781 / NBRC 1676 / NRRL YB-4239) (Yeast).